Here is a 225-residue protein sequence, read N- to C-terminus: UPF0758 protein BCE_4545 (225 aa).

In terms of domain architecture, MPN spans 103–225 (SIRSPEDCAT…FVSLKEKGHI (123 aa)). Positions 174, 176, and 187 each coordinate Zn(2+). Positions 174 to 187 (HNHPSGDPAPSRED) match the JAMM motif motif.

It belongs to the UPF0758 family.

In Bacillus cereus (strain ATCC 10987 / NRS 248), this protein is UPF0758 protein BCE_4545.